A 158-amino-acid polypeptide reads, in one-letter code: HTH-type transcriptional repressor NicR (158 aa).

Residues 20-152 (TEQVGHLLRK…ILYLLRKMID (133 aa)) enclose the HTH marR-type domain. The segment at residues 66 to 89 (QAELIKATAVDQATIRGIVERLKA) is a DNA-binding region (H-T-H motif).

It participates in cofactor degradation; nicotinate degradation [regulation]. Functionally, transcriptional repressor for the nicCDEFTP and nicXR operons, encoding the lower aerobic nicotinate degradation pathway. Acts under non-induced conditions: repression of the nicCDEFTP and nicXR operons becomes alleviated in presence of 6-hydroxynicotinate (6HNA). The protein is HTH-type transcriptional repressor NicR (nicR) of Pseudomonas putida (strain ATCC 47054 / DSM 6125 / CFBP 8728 / NCIMB 11950 / KT2440).